Here is a 431-residue protein sequence, read N- to C-terminus: uncharacterized protein (431 aa).

11 consecutive transmembrane segments (helical) span residues 33 to 53 (VARV…VIYL), 63 to 83 (FSVF…ANGL), 111 to 131 (VSGM…PLWS), 143 to 163 (VALL…LGML), 197 to 217 (LVGF…MLMT), 241 to 261 (AHSI…PVLL), 273 to 293 (GVVI…LTAM), 318 to 338 (LIGG…PWIM), 358 to 378 (AAAV…AAAL), 383 to 403 (SLGW…PLSL), and 407 to 427 (TVVA…VALA).

It to M.tuberculosis Rv1510 and Rv3630.

It localises to the cell membrane. This is an uncharacterized protein from Mycobacterium bovis (strain ATCC BAA-935 / AF2122/97).